The sequence spans 447 residues: Probable asparagine--tRNA ligase, cytoplasmic (447 aa).

It belongs to the class-II aminoacyl-tRNA synthetase family.

The protein localises to the cytoplasm. The enzyme catalyses tRNA(Asn) + L-asparagine + ATP = L-asparaginyl-tRNA(Asn) + AMP + diphosphate + H(+). This Vairimorpha ceranae (strain BRL01) (Microsporidian parasite) protein is Probable asparagine--tRNA ligase, cytoplasmic.